The following is a 1235-amino-acid chain: Serine/threonine-protein kinase TAO2 (1235 aa).

Ser-9 is subject to Phosphoserine. The Protein kinase domain occupies 28–281 (FSDLREIGHG…SEVLLKHRFV (254 aa)). ATP contacts are provided by residues 34–42 (IGHGSFGAV) and Lys-57. 106 to 108 (EYC) contributes to the staurosporine binding site. Asp-151 serves as the catalytic Proton acceptor. Gly-155 is a staurosporine binding site. At Ser-181 the chain carries Phosphoserine. The interval 318–457 (QEAPNGPGAE…PTSTSSSSAR (140 aa)) is disordered. Residues 350-374 (SSHSVPSMSISASSQSSSVNSLADA) are compositionally biased toward low complexity. A compositionally biased stretch (acidic residues) spans 375–395 (SDNEEEEEEEEEEEEEEEEEG). Positions 396–411 (PESREMAMMQEGEHTV) are enriched in basic and acidic residues. Ser-416 is modified (phosphoserine). Coiled-coil stretches lie at residues 488 to 523 (SALREQLSGYKRMRRQHQKQLLALESRLRGEREEHS) and 576 to 603 (KELAALLEAQKRTYKLRKEQLKEELQEN). Ser-658 carries the phosphoserine modification. Positions 683-715 (LRQHEATRELELRQLQAVQRTRAELTRLQHQTE) form a coiled coil. Ser-777, Ser-825, and Ser-827 each carry phosphoserine. The interval 892-941 (GPVLTPVPEEEEEEEEEGGAPIGTPRDPGDGCPSPDIPPEPPPSHLRQYP) is disordered. Positions 899–909 (PEEEEEEEEEG) are enriched in acidic residues. A compositionally biased stretch (pro residues) spans 926–935 (PDIPPEPPPS). Transmembrane regions (helical) follow at residues 967–987 (LLPLLLLLLLPLLAAQGGGGL), 989–1009 (AALLALEVGLVGLGASYLFLC), and 1014–1034 (LPPSLFLLLAQGTALGAVLSL). Residue Arg-1038 is modified to Phosphoserine. 2 helical membrane passes run 1040 to 1060 (LMGVPLGLGAAWLLAWPSLAL) and 1170 to 1190 (LASCLPPWAVHILASWGLLKG). Residues 1210 to 1235 (SASRQLPPGTVAGRRSQTRRALPPWR) form a disordered region.

It belongs to the protein kinase superfamily. STE Ser/Thr protein kinase family. STE20 subfamily. In terms of assembly, self-associates. Interacts with MAP2K3 and MAP2K6. Interacts with tubulins. Interacts with MAP3K7 and interferes with MAP3K7-binding to CHUK and thus prevents NF-kappa-B activation. Isoform 2 interacts with PCDH8; this complex may also include CDH2. Mg(2+) serves as cofactor. Autophosphorylated. Phosphorylated by ATM. Post-translationally, phosphorylated on Ser-1038 by MAPK14. This phosphorylation is required PCDH8 for endocytosis.

The protein resides in the cytoplasmic vesicle membrane. It is found in the cytoplasm. Its subcellular location is the cytoskeleton. It localises to the cell projection. The protein localises to the dendrite. The enzyme catalyses L-seryl-[protein] + ATP = O-phospho-L-seryl-[protein] + ADP + H(+). The catalysed reaction is L-threonyl-[protein] + ATP = O-phospho-L-threonyl-[protein] + ADP + H(+). Its activity is regulated as follows. Moderately inhibited by staurosporine, a broad-range protein kinase inhibitor. Serine/threonine-protein kinase involved in different processes such as membrane blebbing and apoptotic bodies formation DNA damage response and MAPK14/p38 MAPK stress-activated MAPK cascade. Phosphorylates itself, MBP, activated MAPK8, MAP2K3, MAP2K6 and tubulins. Activates the MAPK14/p38 MAPK signaling pathway through the specific activation and phosphorylation of the upstream MAP2K3 and MAP2K6 kinases. In response to DNA damage, involved in the G2/M transition DNA damage checkpoint by activating the p38/MAPK14 stress-activated MAPK cascade, probably by mediating phosphorylation of upstream MAP2K3 and MAP2K6 kinases. May affect microtubule organization and stability. May play a role in the osmotic stress-MAPK8 pathway. Prevents MAP3K7-mediated activation of CHUK, and thus NF-kappa-B activation. Isoform 2, but not isoform 1, is required for PCDH8 endocytosis. Following homophilic interactions between PCDH8 extracellular domains, isoform 2 phosphorylates and activates MAPK14/p38 MAPK which in turn phosphorylates isoform 2. This process leads to PCDH8 endocytosis and CDH2 cointernalization. Both isoforms are involved in MAPK14/p38 MAPK activation. The protein is Serine/threonine-protein kinase TAO2 (Taok2) of Rattus norvegicus (Rat).